The primary structure comprises 335 residues: Biotin synthase (335 aa).

Positions 43 to 269 (YFGKKVKLNM…INPTKEIRIA (227 aa)) constitute a Radical SAM core domain. [4Fe-4S] cluster contacts are provided by Cys61, Cys65, and Cys68. Residues Cys104, Cys137, Cys197, and Arg267 each coordinate [2Fe-2S] cluster.

The protein belongs to the radical SAM superfamily. Biotin synthase family. As to quaternary structure, homodimer. Requires [4Fe-4S] cluster as cofactor. [2Fe-2S] cluster is required as a cofactor.

The catalysed reaction is (4R,5S)-dethiobiotin + (sulfur carrier)-SH + 2 reduced [2Fe-2S]-[ferredoxin] + 2 S-adenosyl-L-methionine = (sulfur carrier)-H + biotin + 2 5'-deoxyadenosine + 2 L-methionine + 2 oxidized [2Fe-2S]-[ferredoxin]. It participates in cofactor biosynthesis; biotin biosynthesis; biotin from 7,8-diaminononanoate: step 2/2. Its function is as follows. Catalyzes the conversion of dethiobiotin (DTB) to biotin by the insertion of a sulfur atom into dethiobiotin via a radical-based mechanism. In Staphylococcus aureus (strain MSSA476), this protein is Biotin synthase.